The following is a 269-amino-acid chain: 5'-nucleotidase SurE (269 aa).

A divalent metal cation contacts are provided by Asp8, Asp9, Ser40, and Asn95.

It belongs to the SurE nucleotidase family. A divalent metal cation is required as a cofactor.

It localises to the cytoplasm. It carries out the reaction a ribonucleoside 5'-phosphate + H2O = a ribonucleoside + phosphate. Nucleotidase that shows phosphatase activity on nucleoside 5'-monophosphates. The protein is 5'-nucleotidase SurE of Nitratidesulfovibrio vulgaris (strain DSM 19637 / Miyazaki F) (Desulfovibrio vulgaris).